The chain runs to 211 residues: MSKVLFIKASPLPNEVSRSSQVAETFMAEYKAKNPSDTVEELVLYNTEVPLLDLELMTAGRELQAGKAFTDLAPDVQKKLNAYNALTEQFLAADKYVFVFPLWNLGIPPLLKAYIDTFVIAGKSFRYTEHGPEALLKDKKAILIHGSGGIYSAGPTSSFTHGEPYLRTILQFIGINVVPSIFVEGIDHNPSKEAEIVAAAKAVAQESATEF.

FMN is bound by residues Ser10 and 17–19 (SRS).

Belongs to the azoreductase type 1 family. In terms of assembly, homodimer. FMN is required as a cofactor.

The enzyme catalyses 2 a quinone + NADH + H(+) = 2 a 1,4-benzosemiquinone + NAD(+). It carries out the reaction N,N-dimethyl-1,4-phenylenediamine + anthranilate + 2 NAD(+) = 2-(4-dimethylaminophenyl)diazenylbenzoate + 2 NADH + 2 H(+). Functionally, quinone reductase that provides resistance to thiol-specific stress caused by electrophilic quinones. In terms of biological role, also exhibits azoreductase activity. Catalyzes the reductive cleavage of the azo bond in aromatic azo compounds to the corresponding amines. In Listeria monocytogenes serovar 1/2a (strain ATCC BAA-679 / EGD-e), this protein is FMN-dependent NADH:quinone oxidoreductase 2.